The primary structure comprises 440 residues: Thymidine phosphorylase (440 aa).

Belongs to the thymidine/pyrimidine-nucleoside phosphorylase family. In terms of assembly, homodimer.

The catalysed reaction is thymidine + phosphate = 2-deoxy-alpha-D-ribose 1-phosphate + thymine. It participates in pyrimidine metabolism; dTMP biosynthesis via salvage pathway; dTMP from thymine: step 1/2. The enzymes which catalyze the reversible phosphorolysis of pyrimidine nucleosides are involved in the degradation of these compounds and in their utilization as carbon and energy sources, or in the rescue of pyrimidine bases for nucleotide synthesis. The polypeptide is Thymidine phosphorylase (Salmonella dublin (strain CT_02021853)).